A 205-amino-acid polypeptide reads, in one-letter code: Large ribosomal subunit protein uL13 (205 aa).

This sequence belongs to the universal ribosomal protein uL13 family.

This chain is Large ribosomal subunit protein uL13 (RpL13A), found in Drosophila melanogaster (Fruit fly).